The following is a 351-amino-acid chain: Phosphoribosylformylglycinamidine cyclo-ligase (351 aa).

This sequence belongs to the AIR synthase family.

It localises to the cytoplasm. It catalyses the reaction 2-formamido-N(1)-(5-O-phospho-beta-D-ribosyl)acetamidine + ATP = 5-amino-1-(5-phospho-beta-D-ribosyl)imidazole + ADP + phosphate + H(+). Its pathway is purine metabolism; IMP biosynthesis via de novo pathway; 5-amino-1-(5-phospho-D-ribosyl)imidazole from N(2)-formyl-N(1)-(5-phospho-D-ribosyl)glycinamide: step 2/2. The chain is Phosphoribosylformylglycinamidine cyclo-ligase from Azotobacter vinelandii (strain DJ / ATCC BAA-1303).